The primary structure comprises 310 residues: uncharacterized protein (310 aa).

The next 9 membrane-spanning stretches (helical) occupy residues 1–21 (MIYF…MFSK), 38–58 (FFFY…VVYT), 74–94 (TSYF…FFIF), 110–130 (YGLW…SFLF), 135–155 (WILY…IFFS), 194–214 (IFIT…IVFS), 228–248 (LFII…MYLF), 256–276 (FPIM…KILI), and 284–304 (IFLT…INLI).

This sequence belongs to the TerC family.

It localises to the cell membrane. This is an uncharacterized protein from Buchnera aphidicola subsp. Schizaphis graminum (strain Sg).